Consider the following 142-residue polypeptide: Transcriptional regulator MraZ (142 aa).

2 consecutive SpoVT-AbrB domains span residues 5-51 and 77-120; these read ASSL…PRNE and AMDV…DAAT.

This sequence belongs to the MraZ family. In terms of assembly, forms oligomers.

The protein localises to the cytoplasm. It is found in the nucleoid. This Polaromonas sp. (strain JS666 / ATCC BAA-500) protein is Transcriptional regulator MraZ.